The primary structure comprises 205 residues: ATP-dependent Clp protease proteolytic subunit (205 aa).

The active-site Nucleophile is the S98. H123 is an active-site residue.

It belongs to the peptidase S14 family. As to quaternary structure, fourteen ClpP subunits assemble into 2 heptameric rings which stack back to back to give a disk-like structure with a central cavity, resembling the structure of eukaryotic proteasomes.

It is found in the cytoplasm. The catalysed reaction is Hydrolysis of proteins to small peptides in the presence of ATP and magnesium. alpha-casein is the usual test substrate. In the absence of ATP, only oligopeptides shorter than five residues are hydrolyzed (such as succinyl-Leu-Tyr-|-NHMec, and Leu-Tyr-Leu-|-Tyr-Trp, in which cleavage of the -Tyr-|-Leu- and -Tyr-|-Trp bonds also occurs).. Cleaves peptides in various proteins in a process that requires ATP hydrolysis. Has a chymotrypsin-like activity. Plays a major role in the degradation of misfolded proteins. The sequence is that of ATP-dependent Clp protease proteolytic subunit from Desulfosudis oleivorans (strain DSM 6200 / JCM 39069 / Hxd3) (Desulfococcus oleovorans).